The chain runs to 137 residues: Oleosin Ara h 11.0102 (137 aa).

Residue alanine 2 is modified to N-acetylalanine; alternate. Helical transmembrane passes span 27 to 47 (AVVA…ATVI) and 55 to 75 (LFVI…LLGL).

This sequence belongs to the oleosin family. Expressed in seeds (at protein level).

Its subcellular location is the lipid droplet. The protein resides in the membrane. Functionally, may have a structural role to stabilize the lipid body during desiccation of the seed by preventing coalescence of the oil. Probably interacts with both lipid and phospholipid moieties of lipid bodies. May also provide recognition signals for specific lipase anchorage in lipolysis during seedling growth. The chain is Oleosin Ara h 11.0102 from Arachis hypogaea (Peanut).